A 549-amino-acid chain; its full sequence is Chaperonin GroEL 1 (549 aa).

ATP-binding positions include 30–33 (TLGP), Lys-51, 87–91 (DGTTT), Gly-415, 479–481 (NAA), and Asp-495.

It belongs to the chaperonin (HSP60) family. In terms of assembly, forms a cylinder of 14 subunits composed of two heptameric rings stacked back-to-back. Interacts with the co-chaperonin GroES.

The protein resides in the cytoplasm. It catalyses the reaction ATP + H2O + a folded polypeptide = ADP + phosphate + an unfolded polypeptide.. Its function is as follows. Together with its co-chaperonin GroES, plays an essential role in assisting protein folding. The GroEL-GroES system forms a nano-cage that allows encapsulation of the non-native substrate proteins and provides a physical environment optimized to promote and accelerate protein folding. The protein is Chaperonin GroEL 1 of Azoarcus sp. (strain BH72).